The following is a 490-amino-acid chain: Histone-lysine N-methyltransferase, H3 lysine-9 specific (490 aa).

The Chromo domain occupies 8-69; the sequence is YEVERIVDEK…RKRRLKGSNS (62 aa). Disordered stretches follow at residues 61–133 and 150–190; these read KRRL…TALT and KKLG…KPRN. Residues 102 to 114 show a composition bias toward basic and acidic residues; sequence FSRELNVKKENKK. Residues 115–133 are compositionally biased toward polar residues; that stretch reads VFSSQTTKRQSRKQSTALT. Lysine 127 bears the N6,N6,N6-trimethyllysine; alternate mark. At lysine 127 the chain carries N6-methyllysine; alternate. The span at 155 to 168 shows a compositional bias: basic and acidic residues; sequence TRNEVKEESQKREL. The segment covering 169-185 has biased composition (polar residues); sequence VSNSIKEATSPKTSSIL. A Pre-SET domain is found at 258–325; it reads SGCNCSSLGG…ECPNRVVQRG (68 aa). Cysteine 260, cysteine 262, cysteine 268, cysteine 276, cysteine 278, cysteine 307, cysteine 311, cysteine 313, and cysteine 317 together coordinate Zn(2+). The SET domain maps to 328-452; it reads LPLEIFKTKE…PLEELTFDYA (125 aa). S-adenosyl-L-methionine-binding positions include 338-340, tyrosine 381, arginine 406, and 407-410; these read KGW and FFNH. A Zn(2+)-binding site is contributed by cysteine 412. Positions 453–472 are autoregulatory loop; the sequence is GAKDFSPVQSQKSQQNRISK. Lysine 455 carries the N6,N6,N6-trimethyllysine; by autocatalysis; alternate modification. Lysine 455 carries the N6,N6-dimethyllysine; by autocatalysis; alternate modification. The residue at position 455 (lysine 455) is an N6-methyllysine; by autocatalysis; alternate. An N6-methyllysine modification is found at lysine 464. The 17-residue stretch at 473 to 489 folds into the Post-SET domain; that stretch reads LRRQCKCGSANCRGWLF. Cysteine 477, cysteine 479, and cysteine 484 together coordinate Zn(2+). 477–478 provides a ligand contact to S-adenosyl-L-methionine; the sequence is CK.

Belongs to the class V-like SAM-binding methyltransferase superfamily. Histone-lysine methyltransferase family. Suvar3-9 subfamily. As to quaternary structure, component of the Clr4 methyltransferase complex (ClrC) composed of at least clr4, rik1, pcu4, rbx1, raf1 and raf2. The cullin pcu4, rik1, raf1, raf2 and the ring-box protein rbx1 are components of an E3 ubiquitin ligase, whose activity is essential for heterochromatin assembly. Interacts directly with pcu4. Interacts with mlo3. Post-translationally, autocatalytic methylation of specific lysine residues in an internal loop (autoregulatory loop) promote a conformational switch that enhances the H3K9me activity of clr4.

The protein localises to the nucleus. Its subcellular location is the cytoplasm. It localises to the cytoskeleton. The protein resides in the microtubule organizing center. It is found in the spindle pole body. The protein localises to the chromosome. The catalysed reaction is L-lysyl(9)-[histone H3] + 3 S-adenosyl-L-methionine = N(6),N(6),N(6)-trimethyl-L-lysyl(9)-[histone H3] + 3 S-adenosyl-L-homocysteine + 3 H(+). It catalyses the reaction N(6)-methyl-L-lysyl(9)-[histone H3] + S-adenosyl-L-methionine = N(6),N(6)-dimethyl-L-lysyl(9)-[histone H3] + S-adenosyl-L-homocysteine + H(+). It carries out the reaction N(6),N(6)-dimethyl-L-lysyl(9)-[histone H3] + S-adenosyl-L-methionine = N(6),N(6),N(6)-trimethyl-L-lysyl(9)-[histone H3] + S-adenosyl-L-homocysteine + H(+). The enzyme catalyses L-lysyl-[protein] + S-adenosyl-L-methionine = N(6)-methyl-L-lysyl-[protein] + S-adenosyl-L-homocysteine + H(+). The catalysed reaction is N(6)-methyl-L-lysyl-[protein] + S-adenosyl-L-methionine = N(6),N(6)-dimethyl-L-lysyl-[protein] + S-adenosyl-L-homocysteine + H(+). It catalyses the reaction N(6),N(6)-dimethyl-L-lysyl-[protein] + S-adenosyl-L-methionine = N(6),N(6),N(6)-trimethyl-L-lysyl-[protein] + S-adenosyl-L-homocysteine + H(+). It carries out the reaction L-lysyl(9)-[histone H3] + S-adenosyl-L-methionine = N(6)-methyl-L-lysyl(9)-[histone H3] + S-adenosyl-L-homocysteine + H(+). Its activity is regulated as follows. An internal loop (autoregulatory loop) inhibits the catalytic activity of the enzyme by blocking the histone H3K9 substrate-binding pocket. Autocatalytic methylation of specific lysine residues in this loop promote a conformational switch that enhances the H3K9me activity of clr4. In terms of biological role, histone methyltransferase which contributes to the establishment of heterochromatin by specifically methylating histone H3 to form H3K9me. Part of the Clr4 methyltransferase complex (ClrC). ClrC preferentially ubiquitylates H3K14 and ClrC-mediated H3 ubiquitination promotes clr4 methyltransferase activity. Clr4 functions as a reader and writer of H3K9 methylation. It sets the H3K9me mark and afterwards this H3K9me mark is recognized by the chromodomains of clr4 and swi6/HP1, which then recruit additional clr4 leading to the methylation of neighboring nucleosomes. H3K9me represents a specific tag for epigenetic transcriptional repression by recruiting swi6/HP1 to methylated histones which leads to transcriptional silencing within centromeric heterochromatin, telomeres, ribosomal DNA repeats, and the silent mating-type region. Clr4 methyltransferase activity promotes the assembly of a tripartite complex composed of ClrC and complexes involved in siRNA generation. Apart from H3K9, also methylates non-histone proteins such as mlo3. Interacts with mlo3 to promote the processing of centromeric and antisense RNAs. This is Histone-lysine N-methyltransferase, H3 lysine-9 specific (clr4) from Schizosaccharomyces pombe (strain 972 / ATCC 24843) (Fission yeast).